A 110-amino-acid polypeptide reads, in one-letter code: Integration host factor subunit alpha (110 aa).

This sequence belongs to the bacterial histone-like protein family. In terms of assembly, heterodimer of an alpha and a beta chain.

Its function is as follows. This protein is one of the two subunits of integration host factor, a specific DNA-binding protein that functions in genetic recombination as well as in transcriptional and translational control. This is Integration host factor subunit alpha from Bdellovibrio bacteriovorus (strain ATCC 15356 / DSM 50701 / NCIMB 9529 / HD100).